The following is a 189-amino-acid chain: Casparian strip membrane protein 2 (189 aa).

The interval 1–21 is disordered; that stretch reads MKVSTIESGEISKGASSPRKG. Residues 1–25 are Cytoplasmic-facing; it reads MKVSTIESGEISKGASSPRKGMKRG. The chain crosses the membrane as a helical span at residues 26–46; it reads LSIMDFILRIFAAMSTLGSAL. Residues 47–73 lie on the Extracellular side of the membrane; sequence SMGTAKQTMPFATRFVRFKVSFHDLPT. The chain crosses the membrane as a helical span at residues 74 to 94; the sequence is FLFFVTANSIVCGYLALSLVL. At 95-108 the chain is on the cytoplasmic side; that stretch reads SFFHIVRTISVKSR. A helical transmembrane segment spans residues 109-129; it reads ILLVFLDTVMFGLLTSGASAA. At 130-163 the chain is on the extracellular side; that stretch reads AAIVYVAHYGNPSANWFPFCQQYNSFCGRISGSL. Residues 164–184 traverse the membrane as a helical segment; sequence VGSFIAVVIFMILILMSGISI. Residues 185–189 are Cytoplasmic-facing; the sequence is SKSKH.

This sequence belongs to the Casparian strip membrane proteins (CASP) family. As to quaternary structure, homodimer and heterodimers.

The protein localises to the cell membrane. Functionally, regulates membrane-cell wall junctions and localized cell wall deposition. Required for establishment of the Casparian strip membrane domain (CSD) and the subsequent formation of Casparian strips, a cell wall modification of the root endodermis that determines an apoplastic barrier between the intraorganismal apoplasm and the extraorganismal apoplasm and prevents lateral diffusion. The protein is Casparian strip membrane protein 2 of Medicago truncatula (Barrel medic).